Here is a 405-residue protein sequence, read N- to C-terminus: Probable tRNA sulfurtransferase (405 aa).

Residues 60-165 (DAVINRLKKV…SNGIFLTSEV (106 aa)) form the THUMP domain. Residues 183 to 184 (ML), 208 to 209 (HF), Arg-265, Gly-287, and Gln-296 contribute to the ATP site.

This sequence belongs to the ThiI family.

The protein localises to the cytoplasm. It carries out the reaction [ThiI sulfur-carrier protein]-S-sulfanyl-L-cysteine + a uridine in tRNA + 2 reduced [2Fe-2S]-[ferredoxin] + ATP + H(+) = [ThiI sulfur-carrier protein]-L-cysteine + a 4-thiouridine in tRNA + 2 oxidized [2Fe-2S]-[ferredoxin] + AMP + diphosphate. It catalyses the reaction [ThiS sulfur-carrier protein]-C-terminal Gly-Gly-AMP + S-sulfanyl-L-cysteinyl-[cysteine desulfurase] + AH2 = [ThiS sulfur-carrier protein]-C-terminal-Gly-aminoethanethioate + L-cysteinyl-[cysteine desulfurase] + A + AMP + 2 H(+). It functions in the pathway cofactor biosynthesis; thiamine diphosphate biosynthesis. Catalyzes the ATP-dependent transfer of a sulfur to tRNA to produce 4-thiouridine in position 8 of tRNAs, which functions as a near-UV photosensor. Also catalyzes the transfer of sulfur to the sulfur carrier protein ThiS, forming ThiS-thiocarboxylate. This is a step in the synthesis of thiazole, in the thiamine biosynthesis pathway. The sulfur is donated as persulfide by IscS. This Pediococcus pentosaceus (strain ATCC 25745 / CCUG 21536 / LMG 10740 / 183-1w) protein is Probable tRNA sulfurtransferase.